The following is a 153-amino-acid chain: HTH-type transcriptional regulator Zrp (153 aa).

The HTH asnC-type domain occupies 2 to 63 (IDYRDRHILS…LLDRKKINLP (62 aa)). Positions 21–40 (LAEIAERVALSVSACSRRVA) form a DNA-binding region, H-T-H motif.

The chain is HTH-type transcriptional regulator Zrp (zrp) from Zymomonas mobilis subsp. mobilis (strain ATCC 10988 / DSM 424 / LMG 404 / NCIMB 8938 / NRRL B-806 / ZM1).